The chain runs to 308 residues: General transcription factor IIH subunit 3 (308 aa).

The C4-type zinc finger occupies 268 to 285 (CSVCLSIFCNFSPICTTC).

This sequence belongs to the TFB4 family. Part of a TFIID-containing RNA polymerase II pre-initiation complex that is composed of TBP and at least GTF2A1, GTF2A2, GTF2E1, GTF2E2, GTF2F1, GTF2H2, GTF2H3, GTF2H4, GTF2H5, GTF2B, TCEA1, ERCC2, ERCC3, TAF1, TAF2, TAF3, TAF4, TAF5, TAF6, TAF7, TAF8, TAF9, TAF10, TAF11, TAF12 and TAF13. Component of the 7-subunit TFIIH core complex composed of XPB/ERCC3, XPD/ERCC2, GTF2H1, GTF2H2, GTF2H3, GTF2H4 and GTF2H5, which is active in NER. The core complex associates with the 3-subunit CDK-activating kinase (CAK) module composed of CCNH/cyclin H, CDK7 and MNAT1 to form the 10-subunit holoenzyme (holo-TFIIH) active in transcription. Interacts with RARA; the interaction requires prior phosphorylation of RARA on 'Ser-369' which then enhances interaction of RARA with CDK7.

The protein localises to the nucleus. Its function is as follows. Component of the general transcription and DNA repair factor IIH (TFIIH) core complex, which is involved in general and transcription-coupled nucleotide excision repair (NER) of damaged DNA and, when complexed to CAK, in RNA transcription by RNA polymerase II. In NER, TFIIH acts by opening DNA around the lesion to allow the excision of the damaged oligonucleotide and its replacement by a new DNA fragment. In transcription, TFIIH has an essential role in transcription initiation. When the pre-initiation complex (PIC) has been established, TFIIH is required for promoter opening and promoter escape. Phosphorylation of the C-terminal tail (CTD) of the largest subunit of RNA polymerase II by the kinase module CAK controls the initiation of transcription. In Homo sapiens (Human), this protein is General transcription factor IIH subunit 3 (GTF2H3).